A 270-amino-acid chain; its full sequence is MLQACKMEGFPLVPPPSEDLVPYDTDLYQRQTHEYYPYLSSDGESHSDHYWDFHPHHVHSEFESFAENNFTELQSVQPPQLQQLYRHMELEQMHVLDTPMVPPHPSLGHQVSYLPRMCLQYPSLSPAQPSSDEEEGERQSPPLEVSDGEADGLEPGPGLLPGETGSKKKIRLYQFLLDLLRSGDMKDSIWWVDKDKGTFQFSSKHKEALAHRWGIQKGNRKKMTYQKMARALRNYGKTGEVKKVKKKLTYQFSGEVLGRGGLAERRHPPH.

The segment at 123–164 (SLSPAQPSSDEEEGERQSPPLEVSDGEADGLEPGPGLLPGET) is disordered. S140 and S146 each carry phosphoserine. The segment covering 153–164 (LEPGPGLLPGET) has biased composition (low complexity). Positions 170–253 (IRLYQFLLDL…VKKKLTYQFS (84 aa)) form a DNA-binding region, ETS. The DNA site is built by K217, R230, R233, and K243.

This sequence belongs to the ETS family. In terms of assembly, binds DNA as a monomer. Can form homomers. Directly interacts with CEBPD/NF-IL6-beta; this interaction does not affect DNA-binding properties of each partner. Interacts with NONO/p54(nrb). Interacts with RUNX1/AML1. Interacts with GFI1; the interaction represses SPI1 transcriptional activity, hence blocks SPI1-induced macrophage differentiation of myeloid progenitor cells. Interacts with CEBPE. Interacts with IRF4/Pip and IRF8. Interacts with JUN. Interacts with RB1. Interacts with TBP. As to expression, in the bone marrow, concentrated in hematopoietic stem cell, lymphoid progenitor, myeloid lineage (granulocyte macrophage progenitors, classical dendritic cells, monocytes) and B-cell clusters. Among B-cells, predominantly expressed in pre-B1 cells. Expressed in germinal center B-cells.

It is found in the nucleus. With respect to regulation, transcriptional activity at macrophage-specific genes is inhibited by interaction with GFI1, which results in the inhibition of SPI1-induced macrophage differentiation of myeloid progenitor cells, but not that of the granulocyte lineage. In terms of biological role, pioneer transcription factor, which controls hematopoietic cell fate by decompacting stem cell heterochromatin and allowing other transcription factors to enter otherwise inaccessible genomic sites. Once in open chromatin, can directly control gene expression by binding genetic regulatory elements and can also more broadly influence transcription by recruiting transcription factors, such as interferon regulatory factors (IRFs), to otherwise inaccessible genomic regions. Transcriptionally activates genes important for myeloid and lymphoid lineages, such as CSF1R. Transcriptional activation from certain promoters, possibly containing low affinity binding sites, is achieved cooperatively with other transcription factors. FCER1A transactivation is achieved in cooperation with GATA1. May be particularly important for the pro- to pre-B cell transition. Binds (via the ETS domain) onto the purine-rich DNA core sequence 5'-GAGGAA-3', also known as the PU-box. In vitro can bind RNA and interfere with pre-mRNA splicing. The polypeptide is Transcription factor PU.1 (SPI1) (Homo sapiens (Human)).